We begin with the raw amino-acid sequence, 234 residues long: Arsenate respiratory reductase iron-sulfur subunit ArrB (234 aa).

3 4Fe-4S ferredoxin-type domains span residues 3–32, 48–79, and 80–109; these read LGMV…NDGI, VKYT…KDKR, and GLTL…FNAA. Residues Cys-12, Cys-15, Cys-18, Cys-22, Cys-57, Cys-60, Cys-65, Cys-69, Cys-89, Cys-92, Cys-95, Cys-99, Cys-164, Cys-167, Cys-179, and Cys-183 each coordinate [4Fe-4S] cluster.

As to quaternary structure, heterodimer composed of one large subunit (ArrA) and one small subunit (ArrB). The cofactor is [4Fe-4S] cluster.

The protein localises to the periplasm. Phosphate is a competitive inhibitor. Component of the arsenate respiratory reductase (Arr) complex, which catalyzes the reduction of arsenate (As(V)) to arsenite (As(III)). ArrB is probably the electron transfer subunit. The periplasmic localization of this complex may allow the cell to couple arsenate reduction to energy production before arsenate can be transported to the cell cytoplasm and enter the ars detoxification pathway, an energy-requiring process. In Shewanella sp. (strain ANA-3), this protein is Arsenate respiratory reductase iron-sulfur subunit ArrB.